Consider the following 123-residue polypeptide: Small ribosomal subunit protein uS12 (123 aa).

Asp89 carries the post-translational modification 3-methylthioaspartic acid. The disordered stretch occupies residues 101 to 123 (SLDTAGVKDRKQSRSKYGAKRPK). Residues 113-123 (SRSKYGAKRPK) show a composition bias toward basic residues.

It belongs to the universal ribosomal protein uS12 family. In terms of assembly, part of the 30S ribosomal subunit. Contacts proteins S8 and S17. May interact with IF1 in the 30S initiation complex.

With S4 and S5 plays an important role in translational accuracy. In terms of biological role, interacts with and stabilizes bases of the 16S rRNA that are involved in tRNA selection in the A site and with the mRNA backbone. Located at the interface of the 30S and 50S subunits, it traverses the body of the 30S subunit contacting proteins on the other side and probably holding the rRNA structure together. The combined cluster of proteins S8, S12 and S17 appears to hold together the shoulder and platform of the 30S subunit. In Laribacter hongkongensis (strain HLHK9), this protein is Small ribosomal subunit protein uS12.